Here is a 147-residue protein sequence, read N- to C-terminus: DNA polymerase epsilon subunit 3 (147 aa).

A2 is modified (N-acetylalanine). T83 carries the phosphothreonine modification. The stretch at 85 to 146 forms a coiled coil; that stretch reads LKEALEAYRR…EEQNEEEEVD (62 aa). A compositionally biased stretch (basic and acidic residues) spans 93–124; it reads RREQKGKKEASEQKKKDKDKKTDSEEQDKSRD. Residues 93 to 147 form a disordered region; it reads RREQKGKKEASEQKKKDKDKKTDSEEQDKSRDEDNDEDEERLEEEEQNEEEEVDN. The residue at position 122 (S122) is a Phosphoserine. A compositionally biased stretch (acidic residues) spans 125 to 147; that stretch reads EDNDEDEERLEEEEQNEEEEVDN.

In terms of assembly, component of the DNA polymerase epsilon complex consisting of four subunits: the catalytic subunit POLE and the accessory subunits POLE2, POLE3 and POLE4. Interaction with POLE4 is a prerequisite for further binding with POLE and POLE2. Heterodimer with CHRAC1; binds to DNA. Component of the CHRAC ISWI chromatin remodeling complex at least composed of SMARCA5/SNF2H, BAZ1A/ACF1, CHRAC1 and POLE3; the complex preferentially binds DNA through the CHRAC1-POLE3 heterodimer and possesses ATP-dependent nucleosome-remodeling activity. Within the complex, the heterodimer with CHRAC1 interacts with SMARCA5/SNF2H; the interaction is direct and enhances nucleosome sliding activity by the SMARCA5/SNF2H and BAZ1A/ACF1 interaction. Within the complex, the heterodimer with CHRAC1 interacts with BAZ1A/ACF1; the interactions are direct.

The protein localises to the nucleus. Accessory component of the DNA polymerase epsilon complex. Participates in DNA repair and in chromosomal DNA replication. Forms a complex with CHRAC1 and binds naked DNA, which is then incorporated into chromatin, aided by the nucleosome-remodeling activity of ISWI/SNF2H and ACF1. Does not enhance nucleosome sliding activity of the ACF-5 ISWI chromatin remodeling complex. The sequence is that of DNA polymerase epsilon subunit 3 (POLE3) from Bos taurus (Bovine).